The primary structure comprises 689 residues: Glycine--tRNA ligase beta subunit (689 aa).

It belongs to the class-II aminoacyl-tRNA synthetase family. As to quaternary structure, tetramer of two alpha and two beta subunits.

It localises to the cytoplasm. It catalyses the reaction tRNA(Gly) + glycine + ATP = glycyl-tRNA(Gly) + AMP + diphosphate. This is Glycine--tRNA ligase beta subunit from Shewanella sediminis (strain HAW-EB3).